Reading from the N-terminus, the 192-residue chain is Signal peptidase complex catalytic subunit SEC11C (192 aa).

Over Met-1 to Arg-28 the chain is Cytoplasmic. The helical; Signal-anchor for type II membrane protein transmembrane segment at Gln-29 to Trp-48 threads the bilayer. The Lumenal segment spans residues Lys-49–Ser-192. Residues Ser-68, His-108, and Asp-134 each act as charge relay system in the active site. Residues Ala-177–Leu-188 are C-terminal short (CTS) helix.

Belongs to the peptidase S26B family. As to quaternary structure, component of the signal peptidase complex paralog C (SPC-C) composed of a catalytic subunit SEC11C and three accessory subunits SPCS1, SPCS2 and SPCS3. Within the complex, interacts with SPCS2 and SPCS3. The complex induces a local thinning of the ER membrane which is used to measure the length of the signal peptide (SP) h-region of protein substrates. This ensures the selectivity of the complex towards h-regions shorter than 18-20 amino acids. In terms of processing, may undergo processing at the N-terminus.

The protein resides in the endoplasmic reticulum membrane. The enzyme catalyses Cleavage of hydrophobic, N-terminal signal or leader sequences from secreted and periplasmic proteins.. Catalytic component of the signal peptidase complex (SPC) which catalyzes the cleavage of N-terminal signal sequences from nascent proteins as they are translocated into the lumen of the endoplasmic reticulum. Specifically cleaves N-terminal signal peptides that contain a hydrophobic alpha-helix (h-region) shorter than 18-20 amino acids. The sequence is that of Signal peptidase complex catalytic subunit SEC11C (SEC11C) from Homo sapiens (Human).